The primary structure comprises 554 residues: Dihydroxy-acid dehydratase (554 aa).

D78 is a Mg(2+) binding site. A [2Fe-2S] cluster-binding site is contributed by C119. Positions 120 and 121 each coordinate Mg(2+). K121 is modified (N6-carboxylysine). C191 serves as a coordination point for [2Fe-2S] cluster. E442 contributes to the Mg(2+) binding site. S468 serves as the catalytic Proton acceptor.

This sequence belongs to the IlvD/Edd family. As to quaternary structure, homodimer. It depends on [2Fe-2S] cluster as a cofactor. The cofactor is Mg(2+).

The enzyme catalyses (2R)-2,3-dihydroxy-3-methylbutanoate = 3-methyl-2-oxobutanoate + H2O. The catalysed reaction is (2R,3R)-2,3-dihydroxy-3-methylpentanoate = (S)-3-methyl-2-oxopentanoate + H2O. The protein operates within amino-acid biosynthesis; L-isoleucine biosynthesis; L-isoleucine from 2-oxobutanoate: step 3/4. It functions in the pathway amino-acid biosynthesis; L-valine biosynthesis; L-valine from pyruvate: step 3/4. Its function is as follows. Functions in the biosynthesis of branched-chain amino acids. Catalyzes the dehydration of (2R,3R)-2,3-dihydroxy-3-methylpentanoate (2,3-dihydroxy-3-methylvalerate) into 2-oxo-3-methylpentanoate (2-oxo-3-methylvalerate) and of (2R)-2,3-dihydroxy-3-methylbutanoate (2,3-dihydroxyisovalerate) into 2-oxo-3-methylbutanoate (2-oxoisovalerate), the penultimate precursor to L-isoleucine and L-valine, respectively. The chain is Dihydroxy-acid dehydratase from Thermotoga sp. (strain RQ2).